Reading from the N-terminus, the 169-residue chain is Ribosome maturation factor RimM (169 aa).

The 76-residue stretch at 92-167 folds into the PRC barrel domain; that stretch reads PKDTYFICDI…YMKIKVVEGL (76 aa).

It belongs to the RimM family. Binds ribosomal protein uS19.

It localises to the cytoplasm. In terms of biological role, an accessory protein needed during the final step in the assembly of 30S ribosomal subunit, possibly for assembly of the head region. Essential for efficient processing of 16S rRNA. May be needed both before and after RbfA during the maturation of 16S rRNA. It has affinity for free ribosomal 30S subunits but not for 70S ribosomes. This is Ribosome maturation factor RimM from Caldicellulosiruptor bescii (strain ATCC BAA-1888 / DSM 6725 / KCTC 15123 / Z-1320) (Anaerocellum thermophilum).